The following is a 226-amino-acid chain: Large ribosomal subunit protein uL1 (226 aa).

Belongs to the universal ribosomal protein uL1 family. Part of the 50S ribosomal subunit.

Binds directly to 23S rRNA. The L1 stalk is quite mobile in the ribosome, and is involved in E site tRNA release. Functionally, protein L1 is also a translational repressor protein, it controls the translation of the L11 operon by binding to its mRNA. The polypeptide is Large ribosomal subunit protein uL1 (Mycoplasmoides gallisepticum (strain R(low / passage 15 / clone 2)) (Mycoplasma gallisepticum)).